Reading from the N-terminus, the 96-residue chain is Large ribosomal subunit protein uL23 (96 aa).

The protein belongs to the universal ribosomal protein uL23 family. In terms of assembly, part of the 50S ribosomal subunit. Contacts protein L29, and trigger factor when it is bound to the ribosome.

In terms of biological role, one of the early assembly proteins it binds 23S rRNA. One of the proteins that surrounds the polypeptide exit tunnel on the outside of the ribosome. Forms the main docking site for trigger factor binding to the ribosome. The protein is Large ribosomal subunit protein uL23 of Finegoldia magna (strain ATCC 29328 / DSM 20472 / WAL 2508) (Peptostreptococcus magnus).